A 362-amino-acid polypeptide reads, in one-letter code: Chorismate synthase (362 aa).

The segment at 39–59 (ADLQGDLDRRKPGTSRYTTPR) is disordered. Residues Arg-48 and Arg-54 each coordinate NADP(+). Residues 125–127 (RSS), 238–239 (NA), Gly-278, 293–297 (KPTSS), and Arg-319 contribute to the FMN site.

This sequence belongs to the chorismate synthase family. Homotetramer. FMNH2 is required as a cofactor.

It carries out the reaction 5-O-(1-carboxyvinyl)-3-phosphoshikimate = chorismate + phosphate. It participates in metabolic intermediate biosynthesis; chorismate biosynthesis; chorismate from D-erythrose 4-phosphate and phosphoenolpyruvate: step 7/7. In terms of biological role, catalyzes the anti-1,4-elimination of the C-3 phosphate and the C-6 proR hydrogen from 5-enolpyruvylshikimate-3-phosphate (EPSP) to yield chorismate, which is the branch point compound that serves as the starting substrate for the three terminal pathways of aromatic amino acid biosynthesis. This reaction introduces a second double bond into the aromatic ring system. This is Chorismate synthase from Aeromonas hydrophila subsp. hydrophila (strain ATCC 7966 / DSM 30187 / BCRC 13018 / CCUG 14551 / JCM 1027 / KCTC 2358 / NCIMB 9240 / NCTC 8049).